A 170-amino-acid chain; its full sequence is MTPLIFASEGFGLNLNIFETNIINLAVVVFGLYKFLPGFLGKILEKRRTTILSDLKEAEERLAQAQDSLSQAKDDLSSAKQKADKIRNDCKVRAEAIRLESEKRTVEEMARIKQGAASDLSAEAARVTSQLRKEAAELAIEKALAMLPKKLDSNTQDNFLKQSIKNIGDN.

A helical transmembrane segment spans residues Ile-22–Leu-44.

The protein belongs to the ATPase B chain family. In terms of assembly, F-type ATPases have 2 components, F(1) - the catalytic core - and F(0) - the membrane proton channel. F(1) has five subunits: alpha(3), beta(3), gamma(1), delta(1), epsilon(1). F(0) has four main subunits: a(1), b(1), b'(1) and c(10-14). The alpha and beta chains form an alternating ring which encloses part of the gamma chain. F(1) is attached to F(0) by a central stalk formed by the gamma and epsilon chains, while a peripheral stalk is formed by the delta, b and b' chains.

It is found in the cellular thylakoid membrane. Functionally, f(1)F(0) ATP synthase produces ATP from ADP in the presence of a proton or sodium gradient. F-type ATPases consist of two structural domains, F(1) containing the extramembraneous catalytic core and F(0) containing the membrane proton channel, linked together by a central stalk and a peripheral stalk. During catalysis, ATP synthesis in the catalytic domain of F(1) is coupled via a rotary mechanism of the central stalk subunits to proton translocation. Component of the F(0) channel, it forms part of the peripheral stalk, linking F(1) to F(0). The polypeptide is ATP synthase subunit b (Prochlorococcus marinus (strain NATL1A)).